The sequence spans 82 residues: Cytochrome b559 subunit alpha (82 aa).

A helical membrane pass occupies residues 22-36; it reads IIHAVTLPAIFIAGF. Residue His-24 coordinates heme.

The protein belongs to the PsbE/PsbF family. In terms of assembly, heterodimer of an alpha subunit and a beta subunit. PSII is composed of 1 copy each of membrane proteins PsbA, PsbB, PsbC, PsbD, PsbE, PsbF, PsbH, PsbI, PsbJ, PsbK, PsbL, PsbM, PsbT, PsbX, PsbY, Psb30/Ycf12, peripheral proteins PsbO, CyanoQ (PsbQ), PsbU, PsbV and a large number of cofactors. It forms dimeric complexes. Heme b is required as a cofactor.

Its subcellular location is the cellular thylakoid membrane. In terms of biological role, this b-type cytochrome is tightly associated with the reaction center of photosystem II (PSII). PSII is a light-driven water:plastoquinone oxidoreductase that uses light energy to abstract electrons from H(2)O, generating O(2) and a proton gradient subsequently used for ATP formation. It consists of a core antenna complex that captures photons, and an electron transfer chain that converts photonic excitation into a charge separation. The sequence is that of Cytochrome b559 subunit alpha from Prochlorococcus marinus (strain SARG / CCMP1375 / SS120).